A 263-amino-acid polypeptide reads, in one-letter code: 3-methyl-2-oxobutanoate hydroxymethyltransferase (263 aa).

Residues aspartate 43 and aspartate 82 each coordinate Mg(2+). 3-methyl-2-oxobutanoate contacts are provided by residues 43–44, aspartate 82, and lysine 111; that span reads DS. Glutamate 113 serves as a coordination point for Mg(2+). The Proton acceptor role is filled by glutamate 179.

It belongs to the PanB family. In terms of assembly, homodecamer; pentamer of dimers. Mg(2+) is required as a cofactor.

It localises to the cytoplasm. It carries out the reaction 3-methyl-2-oxobutanoate + (6R)-5,10-methylene-5,6,7,8-tetrahydrofolate + H2O = 2-dehydropantoate + (6S)-5,6,7,8-tetrahydrofolate. It functions in the pathway cofactor biosynthesis; (R)-pantothenate biosynthesis; (R)-pantoate from 3-methyl-2-oxobutanoate: step 1/2. Functionally, catalyzes the reversible reaction in which hydroxymethyl group from 5,10-methylenetetrahydrofolate is transferred onto alpha-ketoisovalerate to form ketopantoate. This is 3-methyl-2-oxobutanoate hydroxymethyltransferase from Neisseria meningitidis serogroup A / serotype 4A (strain DSM 15465 / Z2491).